The sequence spans 433 residues: Chaperone SurA (433 aa).

The N-terminal stretch at 1–24 (MKYRIKALLLASSLIITTITSVQA) is a signal peptide. 2 consecutive PpiC domains span residues 175–276 (NVEY…KVLD) and 285–384 (VEEV…KLED).

The protein localises to the periplasm. The catalysed reaction is [protein]-peptidylproline (omega=180) = [protein]-peptidylproline (omega=0). Chaperone involved in the correct folding and assembly of outer membrane proteins. Recognizes specific patterns of aromatic residues and the orientation of their side chains, which are found more frequently in integral outer membrane proteins. May act in both early periplasmic and late outer membrane-associated steps of protein maturation. The sequence is that of Chaperone SurA from Colwellia psychrerythraea (strain 34H / ATCC BAA-681) (Vibrio psychroerythus).